The following is a 593-amino-acid chain: Elongation factor 4 (593 aa).

Residues 2-181 (KNIRNFCIIA…AVVERIPHPT (180 aa)) form the tr-type G domain. GTP-binding positions include 14-19 (DHGKST) and 128-131 (NKCD).

This sequence belongs to the TRAFAC class translation factor GTPase superfamily. Classic translation factor GTPase family. LepA subfamily.

The protein localises to the cell inner membrane. The catalysed reaction is GTP + H2O = GDP + phosphate + H(+). In terms of biological role, required for accurate and efficient protein synthesis under certain stress conditions. May act as a fidelity factor of the translation reaction, by catalyzing a one-codon backward translocation of tRNAs on improperly translocated ribosomes. Back-translocation proceeds from a post-translocation (POST) complex to a pre-translocation (PRE) complex, thus giving elongation factor G a second chance to translocate the tRNAs correctly. Binds to ribosomes in a GTP-dependent manner. The sequence is that of Elongation factor 4 from Phocaeicola vulgatus (strain ATCC 8482 / DSM 1447 / JCM 5826 / CCUG 4940 / NBRC 14291 / NCTC 11154) (Bacteroides vulgatus).